Here is a 319-residue protein sequence, read N- to C-terminus: Ferrochelatase (319 aa).

Residues H194 and E275 each coordinate Fe cation.

It belongs to the ferrochelatase family.

The protein localises to the cytoplasm. The enzyme catalyses heme b + 2 H(+) = protoporphyrin IX + Fe(2+). Its pathway is porphyrin-containing compound metabolism; protoheme biosynthesis; protoheme from protoporphyrin-IX: step 1/1. Its function is as follows. Catalyzes the ferrous insertion into protoporphyrin IX. The protein is Ferrochelatase of Vibrio vulnificus (strain CMCP6).